Here is a 209-residue protein sequence, read N- to C-terminus: Imidazoleglycerol-phosphate dehydratase (209 aa).

This sequence belongs to the imidazoleglycerol-phosphate dehydratase family.

The protein localises to the cytoplasm. The enzyme catalyses D-erythro-1-(imidazol-4-yl)glycerol 3-phosphate = 3-(imidazol-4-yl)-2-oxopropyl phosphate + H2O. It participates in amino-acid biosynthesis; L-histidine biosynthesis; L-histidine from 5-phospho-alpha-D-ribose 1-diphosphate: step 6/9. In Microcystis aeruginosa (strain NIES-843 / IAM M-2473), this protein is Imidazoleglycerol-phosphate dehydratase.